Here is a 306-residue protein sequence, read N- to C-terminus: D-alanine--D-alanine ligase (306 aa).

One can recognise an ATP-grasp domain in the interval 101–303 (KYLWQGCGLP…FSQLVARILE (203 aa)). 134 to 189 (IDALGLPLFVKPSREGSSVGISRVNQASELQAALQEAFRFDDEVLVEAFLSGPEYT) contacts ATP. Mg(2+) is bound by residues D257, E270, and N272.

This sequence belongs to the D-alanine--D-alanine ligase family. Mg(2+) is required as a cofactor. The cofactor is Mn(2+).

It is found in the cytoplasm. It carries out the reaction 2 D-alanine + ATP = D-alanyl-D-alanine + ADP + phosphate + H(+). It participates in cell wall biogenesis; peptidoglycan biosynthesis. Functionally, cell wall formation. The chain is D-alanine--D-alanine ligase from Erwinia tasmaniensis (strain DSM 17950 / CFBP 7177 / CIP 109463 / NCPPB 4357 / Et1/99).